Consider the following 181-residue polypeptide: ATP-dependent protease subunit HslV (181 aa).

The active site involves T7. Residues G166, C169, and T172 each coordinate Na(+).

Belongs to the peptidase T1B family. HslV subfamily. In terms of assembly, a double ring-shaped homohexamer of HslV is capped on each side by a ring-shaped HslU homohexamer. The assembly of the HslU/HslV complex is dependent on binding of ATP.

Its subcellular location is the cytoplasm. It carries out the reaction ATP-dependent cleavage of peptide bonds with broad specificity.. Allosterically activated by HslU binding. In terms of biological role, protease subunit of a proteasome-like degradation complex believed to be a general protein degrading machinery. This chain is ATP-dependent protease subunit HslV, found in Variovorax paradoxus (strain S110).